A 133-amino-acid chain; its full sequence is Protein NrdI (133 aa).

It belongs to the NrdI family.

Probably involved in ribonucleotide reductase function. In Cronobacter sakazakii (strain ATCC BAA-894) (Enterobacter sakazakii), this protein is Protein NrdI.